The primary structure comprises 336 residues: Ornithine carbamoyltransferase, catabolic (336 aa).

Residues 57 to 60 (STRT), Gln-84, Arg-108, and 135 to 138 (HPTQ) contribute to the carbamoyl phosphate site. L-ornithine contacts are provided by residues Asn-168, Asp-232, and 236 to 237 (SM). Residues 274–275 (CL) and Arg-321 each bind carbamoyl phosphate.

Belongs to the aspartate/ornithine carbamoyltransferase superfamily. OTCase family.

The protein localises to the cytoplasm. It carries out the reaction carbamoyl phosphate + L-ornithine = L-citrulline + phosphate + H(+). It participates in amino-acid degradation; L-arginine degradation via ADI pathway; carbamoyl phosphate from L-arginine: step 2/2. In terms of biological role, reversibly catalyzes the transfer of the carbamoyl group from carbamoyl phosphate (CP) to the N(epsilon) atom of ornithine (ORN) to produce L-citrulline. The sequence is that of Ornithine carbamoyltransferase, catabolic from Burkholderia pseudomallei (strain K96243).